We begin with the raw amino-acid sequence, 296 residues long: Phosphoribosylaminoimidazole-succinocarboxamide synthase (296 aa).

It belongs to the SAICAR synthetase family.

It carries out the reaction 5-amino-1-(5-phospho-D-ribosyl)imidazole-4-carboxylate + L-aspartate + ATP = (2S)-2-[5-amino-1-(5-phospho-beta-D-ribosyl)imidazole-4-carboxamido]succinate + ADP + phosphate + 2 H(+). Its pathway is purine metabolism; IMP biosynthesis via de novo pathway; 5-amino-1-(5-phospho-D-ribosyl)imidazole-4-carboxamide from 5-amino-1-(5-phospho-D-ribosyl)imidazole-4-carboxylate: step 1/2. The protein is Phosphoribosylaminoimidazole-succinocarboxamide synthase of Geotalea uraniireducens (strain Rf4) (Geobacter uraniireducens).